Consider the following 738-residue polypeptide: Outer membrane protein assembly factor BamA (738 aa).

The first 13 residues, 1–13, serve as a signal peptide directing secretion; the sequence is MVWLLFLSSFCFA. 5 POTRA domains span residues 14–81, 82–159, 162–248, 251–329, and 332–404; these read DEVV…LQEN, PILR…VKEA, TVIR…LKEG, YSFG…VVST, and YRIR…VKER.

This sequence belongs to the BamA family. As to quaternary structure, part of the Bam complex.

It localises to the cell outer membrane. Functionally, part of the outer membrane protein assembly complex, which is involved in assembly and insertion of beta-barrel proteins into the outer membrane. In Neorickettsia risticii (strain Illinois), this protein is Outer membrane protein assembly factor BamA.